Reading from the N-terminus, the 935-residue chain is Auxin response factor 6 (935 aa).

Residues 129–231 constitute a DNA-binding region (TF-B3); it reads FCKTLTASDT…QLLLGIRRAN (103 aa). 2 disordered regions span residues 536–624 and 645–714; these read QAYL…PLHT and SAMT…SASD. Low complexity-rich tracts occupy residues 546-565 and 573-582; these read QPQS…QQQQ and SASSAAVVSA. 2 stretches are compositionally biased toward polar residues: residues 583–624 and 661–689; these read MSQF…PLHT and SSFQ…SNVP. A PB1 domain is found at 796-880; sequence NTFVKVYKSG…WCIKILSPQE (85 aa). Over residues 896–909 the composition is skewed to polar residues; that stretch reads PSSNNVDKLPSNGN. Positions 896–917 are disordered; it reads PSSNNVDKLPSNGNCDDFGNRS.

It belongs to the ARF family. Homodimers and heterodimers. Expressed in the whole plant.

The protein resides in the nucleus. Auxin response factors (ARFs) are transcriptional factors that bind specifically to the DNA sequence 5'-TGTCTC-3' found in the auxin-responsive promoter elements (AuxREs). Seems to act as transcriptional activator. Formation of heterodimers with Aux/IAA proteins may alter their ability to modulate early auxin response genes expression. Regulates both stamen and gynoecium maturation. Promotes jasmonic acid production. Partially redundant with ARF8. The polypeptide is Auxin response factor 6 (ARF6) (Arabidopsis thaliana (Mouse-ear cress)).